The chain runs to 325 residues: ATP phosphoribosyltransferase (325 aa).

The protein belongs to the ATP phosphoribosyltransferase family. Long subfamily. Requires Mg(2+) as cofactor.

It is found in the cytoplasm. It carries out the reaction 1-(5-phospho-beta-D-ribosyl)-ATP + diphosphate = 5-phospho-alpha-D-ribose 1-diphosphate + ATP. The protein operates within amino-acid biosynthesis; L-histidine biosynthesis; L-histidine from 5-phospho-alpha-D-ribose 1-diphosphate: step 1/9. With respect to regulation, feedback inhibited by histidine. Its function is as follows. Catalyzes the condensation of ATP and 5-phosphoribose 1-diphosphate to form N'-(5'-phosphoribosyl)-ATP (PR-ATP). Has a crucial role in the pathway because the rate of histidine biosynthesis seems to be controlled primarily by regulation of HisG enzymatic activity. This is ATP phosphoribosyltransferase from Nitrobacter hamburgensis (strain DSM 10229 / NCIMB 13809 / X14).